The primary structure comprises 215 residues: Urease accessory protein UreE (215 aa).

Residues 134–215 (FDPEGGAYAP…HGHSHKHDHK (82 aa)) form a disordered region. Positions 164–206 (GHHDHADHEHDHKHDHGKHDHAGHDHAHDHHVHDEHCGHDHGH) are enriched in basic and acidic residues.

The protein belongs to the UreE family.

It is found in the cytoplasm. Its function is as follows. Involved in urease metallocenter assembly. Binds nickel. Probably functions as a nickel donor during metallocenter assembly. This chain is Urease accessory protein UreE, found in Rhodopseudomonas palustris (strain HaA2).